Consider the following 314-residue polypeptide: MEKPFGFVVIDKPSGLTSHDCVNRLRKVFGIRKIGHSGTLDPAVTGVLPIAIGDATRLISYLQGSKAYTGIIQLGATTNTDDMQGEIIESKAWPLITQNDINYLLENFRGEILQKPPIFSSVHIKGERAYKKARKGEKFDLIPKKVTINKLNLISWSQNKGELLVDVDCSTGTYIRSLARDIGDKIGCGGYLKSLRRTKAYNFIENHSVKLPEKSDFYPEEDKPKVLNPNIFFKHLSSFELISEEEIISWRSGRKISFQNNIKRLKVSKNNEVEDSFIHNNNILVLNKENKILGIACLDESFAIKPKVVFNAIG.

D41 acts as the Nucleophile in catalysis.

The protein belongs to the pseudouridine synthase TruB family. Type 1 subfamily.

It carries out the reaction uridine(55) in tRNA = pseudouridine(55) in tRNA. Its function is as follows. Responsible for synthesis of pseudouridine from uracil-55 in the psi GC loop of transfer RNAs. The chain is tRNA pseudouridine synthase B from Prochlorococcus marinus (strain NATL1A).